Reading from the N-terminus, the 186-residue chain is Elongation factor P (186 aa).

It belongs to the elongation factor P family.

The protein localises to the cytoplasm. It functions in the pathway protein biosynthesis; polypeptide chain elongation. Its function is as follows. Involved in peptide bond synthesis. Stimulates efficient translation and peptide-bond synthesis on native or reconstituted 70S ribosomes in vitro. Probably functions indirectly by altering the affinity of the ribosome for aminoacyl-tRNA, thus increasing their reactivity as acceptors for peptidyl transferase. This is Elongation factor P from Enterococcus faecalis (strain ATCC 700802 / V583).